The following is an 834-amino-acid chain: ATP-dependent 6-phosphofructokinase (834 aa).

Residues 1–426 (MTTTSKIIND…FYEIFIACSN (426 aa)) form an N-terminal catalytic PFK domain 1 region. ATP-binding positions include G62, 123–124 (RS), and 153–156 (GDGS). D154 contributes to the Mg(2+) binding site. Residues 199-201 (SID), R236, 243-245 (MGR), E299, R326, and 332-335 (HVQR) contribute to the substrate site. D201 (proton acceptor) is an active-site residue. Residues 427 to 437 (LHRRKVESKGM) are interdomain linker. The tract at residues 438–834 (GVLILHSGGP…DPNVNPQFTL (397 aa)) is C-terminal regulatory PFK domain 2. Beta-D-fructose 2,6-bisphosphate contacts are provided by residues R507, 566–570 (TIANN), R603, 610–612 (MGA), E666, R692, 698–701 (HLQQ), and R764. The disordered stretch occupies residues 799 to 834 (SNLSEQDRPIKKSDISSPTSYSQKTFDPNVNPQFTL). The span at 803–812 (EQDRPIKKSD) shows a compositional bias: basic and acidic residues. Residues 813-834 (ISSPTSYSQKTFDPNVNPQFTL) show a composition bias toward polar residues.

The protein belongs to the phosphofructokinase type A (PFKA) family. ATP-dependent PFK group I subfamily. Eukaryotic two domain clade 'E' sub-subfamily. In terms of assembly, homotetramer. The cofactor is Mg(2+). In terms of processing, the N-terminus is blocked.

The protein resides in the cytoplasm. The enzyme catalyses beta-D-fructose 6-phosphate + ATP = beta-D-fructose 1,6-bisphosphate + ADP + H(+). It functions in the pathway carbohydrate degradation; glycolysis; D-glyceraldehyde 3-phosphate and glycerone phosphate from D-glucose: step 3/4. Its activity is regulated as follows. Allosterically activated by ADP, AMP, or fructose 2,6-bisphosphate, and allosterically inhibited by ATP or citrate. Functionally, catalyzes the phosphorylation of D-fructose 6-phosphate to fructose 1,6-bisphosphate by ATP, the first committing step of glycolysis. The polypeptide is ATP-dependent 6-phosphofructokinase (pfkA) (Dictyostelium discoideum (Social amoeba)).